We begin with the raw amino-acid sequence, 851 residues long: DNA mismatch repair protein MutS (851 aa).

G602 to S609 serves as a coordination point for ATP.

This sequence belongs to the DNA mismatch repair MutS family.

Functionally, this protein is involved in the repair of mismatches in DNA. It is possible that it carries out the mismatch recognition step. This protein has a weak ATPase activity. This chain is DNA mismatch repair protein MutS, found in Streptococcus pyogenes serotype M6 (strain ATCC BAA-946 / MGAS10394).